Here is a 792-residue protein sequence, read N- to C-terminus: LPS-assembly protein LptD (792 aa).

Residues 1–22 (MYRVLRLLPLPLSVAISLSALA) form the signal peptide.

Belongs to the LptD family. In terms of assembly, component of the lipopolysaccharide transport and assembly complex. Interacts with LptE and LptA.

Its subcellular location is the cell outer membrane. In terms of biological role, together with LptE, is involved in the assembly of lipopolysaccharide (LPS) at the surface of the outer membrane. This is LPS-assembly protein LptD from Xylella fastidiosa (strain Temecula1 / ATCC 700964).